Consider the following 210-residue polypeptide: Uridine kinase (210 aa).

12 to 19 (GGSGGGKT) contacts ATP.

Belongs to the uridine kinase family.

Its subcellular location is the cytoplasm. It catalyses the reaction uridine + ATP = UMP + ADP + H(+). The catalysed reaction is cytidine + ATP = CMP + ADP + H(+). It participates in pyrimidine metabolism; CTP biosynthesis via salvage pathway; CTP from cytidine: step 1/3. The protein operates within pyrimidine metabolism; UMP biosynthesis via salvage pathway; UMP from uridine: step 1/1. This chain is Uridine kinase, found in Streptococcus gordonii (strain Challis / ATCC 35105 / BCRC 15272 / CH1 / DL1 / V288).